A 280-amino-acid polypeptide reads, in one-letter code: Ribosomal RNA small subunit methyltransferase A (280 aa).

6 residues coordinate S-adenosyl-L-methionine: His15, Leu17, Gly42, Glu64, Asp89, and Asn109.

The protein belongs to the class I-like SAM-binding methyltransferase superfamily. rRNA adenine N(6)-methyltransferase family. RsmA subfamily.

The protein resides in the cytoplasm. The catalysed reaction is adenosine(1518)/adenosine(1519) in 16S rRNA + 4 S-adenosyl-L-methionine = N(6)-dimethyladenosine(1518)/N(6)-dimethyladenosine(1519) in 16S rRNA + 4 S-adenosyl-L-homocysteine + 4 H(+). In terms of biological role, specifically dimethylates two adjacent adenosines (A1518 and A1519) in the loop of a conserved hairpin near the 3'-end of 16S rRNA in the 30S particle. May play a critical role in biogenesis of 30S subunits. This is Ribosomal RNA small subunit methyltransferase A from Prochlorococcus marinus (strain MIT 9313).